The following is a 584-amino-acid chain: Putative sel1-like repeat-containing protein L18 (584 aa).

Sel1-like repeat units follow at residues 132–167 (SMAQ…DQNN), 168–203 (KYGL…CQNF), 204–237 (SKAQ…NQNH), 238–273 (SSAQ…SQGL), 274–309 (NSAK…YDDG), and 316–351 (EVAM…NTKN).

In Acanthamoeba polyphaga (Amoeba), this protein is Putative sel1-like repeat-containing protein L18.